We begin with the raw amino-acid sequence, 89 residues long: Small ribosomal subunit protein uS15 (89 aa).

Positions 1–21 (MSIAAERKAEVIKTNARKDGD) are enriched in basic and acidic residues. The tract at residues 1–24 (MSIAAERKAEVIKTNARKDGDTGS) is disordered.

Belongs to the universal ribosomal protein uS15 family. In terms of assembly, part of the 30S ribosomal subunit. Forms a bridge to the 50S subunit in the 70S ribosome, contacting the 23S rRNA.

Functionally, one of the primary rRNA binding proteins, it binds directly to 16S rRNA where it helps nucleate assembly of the platform of the 30S subunit by binding and bridging several RNA helices of the 16S rRNA. Its function is as follows. Forms an intersubunit bridge (bridge B4) with the 23S rRNA of the 50S subunit in the ribosome. The chain is Small ribosomal subunit protein uS15 from Rhodopseudomonas palustris (strain BisA53).